A 427-amino-acid chain; its full sequence is Trigger factor (427 aa).

The region spanning 163–248 is the PPIase FKBP-type domain; sequence GDTVVIDFVG…IHEVKAKEVP (86 aa).

Belongs to the FKBP-type PPIase family. Tig subfamily.

The protein localises to the cytoplasm. It carries out the reaction [protein]-peptidylproline (omega=180) = [protein]-peptidylproline (omega=0). Involved in protein export. Acts as a chaperone by maintaining the newly synthesized protein in an open conformation. Functions as a peptidyl-prolyl cis-trans isomerase. The chain is Trigger factor from Streptococcus pneumoniae serotype 2 (strain D39 / NCTC 7466).